The sequence spans 122 residues: Large ribosomal subunit protein uL14 (122 aa).

It belongs to the universal ribosomal protein uL14 family. Part of the 50S ribosomal subunit. Forms a cluster with proteins L3 and L19. In the 70S ribosome, L14 and L19 interact and together make contacts with the 16S rRNA in bridges B5 and B8.

Functionally, binds to 23S rRNA. Forms part of two intersubunit bridges in the 70S ribosome. This chain is Large ribosomal subunit protein uL14, found in Cyanothece sp. (strain PCC 7425 / ATCC 29141).